A 707-amino-acid polypeptide reads, in one-letter code: Elongation factor G (707 aa).

Residues 9 to 293 (HDVRNIGIMA…GVVDYLPSPE (285 aa)) form the tr-type G domain. GTP contacts are provided by residues 18–25 (AHIDAGKT), 90–94 (DTPGH), and 144–147 (NKMD).

The protein belongs to the TRAFAC class translation factor GTPase superfamily. Classic translation factor GTPase family. EF-G/EF-2 subfamily.

It localises to the cytoplasm. Its function is as follows. Catalyzes the GTP-dependent ribosomal translocation step during translation elongation. During this step, the ribosome changes from the pre-translocational (PRE) to the post-translocational (POST) state as the newly formed A-site-bound peptidyl-tRNA and P-site-bound deacylated tRNA move to the P and E sites, respectively. Catalyzes the coordinated movement of the two tRNA molecules, the mRNA and conformational changes in the ribosome. The chain is Elongation factor G from Bifidobacterium longum (strain DJO10A).